Consider the following 200-residue polypeptide: 3-isopropylmalate dehydratase small subunit (200 aa).

The protein belongs to the LeuD family. LeuD type 1 subfamily. As to quaternary structure, heterodimer of LeuC and LeuD.

The enzyme catalyses (2R,3S)-3-isopropylmalate = (2S)-2-isopropylmalate. It functions in the pathway amino-acid biosynthesis; L-leucine biosynthesis; L-leucine from 3-methyl-2-oxobutanoate: step 2/4. Its function is as follows. Catalyzes the isomerization between 2-isopropylmalate and 3-isopropylmalate, via the formation of 2-isopropylmaleate. The chain is 3-isopropylmalate dehydratase small subunit from Pseudarthrobacter chlorophenolicus (strain ATCC 700700 / DSM 12829 / CIP 107037 / JCM 12360 / KCTC 9906 / NCIMB 13794 / A6) (Arthrobacter chlorophenolicus).